We begin with the raw amino-acid sequence, 202 residues long: Nascent polypeptide-associated complex subunit alpha (202 aa).

The segment covering 1–19 (MADPRVEELPDEEVPKTNV) has biased composition (basic and acidic residues). The segment at 1–44 (MADPRVEELPDEEVPKTNVEDAGSDSESEAGEEPTIPGGAAVAV) is disordered. Over residues 22–32 (AGSDSESEAGE) the composition is skewed to acidic residues. The NAC-A/B domain occupies 46-111 (SRNEKKARKA…AKIEDLNAQA (66 aa)). The disordered stretch occupies residues 118–165 (QLAAQEAAQEHAGHEHEDILGKAKEPEAEKKEAEEDDGEEVDESGLEA). Positions 125–150 (AQEHAGHEHEDILGKAKEPEAEKKEA) are enriched in basic and acidic residues. Residues 151 to 162 (EEDDGEEVDESG) are compositionally biased toward acidic residues. A UBA domain is found at 163–202 (LEAKDIELVMAQANVSRKKAVKALRENDNDIVNSIMALSI).

It belongs to the NAC-alpha family. Part of the nascent polypeptide-associated complex (NAC), consisting of egd2 and egd1. NAC associates with ribosomes via egd1.

The protein localises to the cytoplasm. Its subcellular location is the nucleus. Component of the nascent polypeptide-associated complex (NAC), a dynamic component of the ribosomal exit tunnel, protecting the emerging polypeptides from interaction with other cytoplasmic proteins to ensure appropriate nascent protein targeting. The NAC complex also promotes mitochondrial protein import by enhancing productive ribosome interactions with the outer mitochondrial membrane and blocks the inappropriate interaction of ribosomes translating non-secretory nascent polypeptides with translocation sites in the membrane of the endoplasmic reticulum. Egd2 may also be involved in transcription regulation. This is Nascent polypeptide-associated complex subunit alpha (egd2) from Aspergillus terreus (strain NIH 2624 / FGSC A1156).